Reading from the N-terminus, the 676-residue chain is Methionine--tRNA ligase (676 aa).

The 'HIGH' region signature appears at 15-25; sequence PYANGPIHLGH. Cys146, Cys149, Cys159, and Cys162 together coordinate Zn(2+). The 'KMSKS' region motif lies at 332–336; that stretch reads KMSKS. ATP is bound at residue Lys335. In terms of domain architecture, tRNA-binding spans 575–676; the sequence is DFAKIDLRIA…EGAQPGMRVK (102 aa).

This sequence belongs to the class-I aminoacyl-tRNA synthetase family. MetG type 1 subfamily. Homodimer. It depends on Zn(2+) as a cofactor.

The protein localises to the cytoplasm. The catalysed reaction is tRNA(Met) + L-methionine + ATP = L-methionyl-tRNA(Met) + AMP + diphosphate. In terms of biological role, is required not only for elongation of protein synthesis but also for the initiation of all mRNA translation through initiator tRNA(fMet) aminoacylation. In Shewanella sp. (strain MR-4), this protein is Methionine--tRNA ligase.